Consider the following 615-residue polypeptide: Ankyrin repeat and LEM domain-containing protein 1 (615 aa).

3 ANK repeats span residues 39 to 71 (DGAAAVHLAAGARHPRGLRCLGALLRQGGDPNA), 75 to 104 (EALTPLHVAAAWGCRRGLELLLSQGADPAL), and 108 to 137 (DGLRPLDLALQQGHLECARVLQDLDTRTRT). A disordered region spans residues 138 to 210 (RTRIGAETQE…DKHGSSASPP (73 aa)). Positions 271–280 (LNARLQALTL) match the Nuclear export signal motif. The segment covering 283-294 (PNAAGFQSSPSS) has biased composition (polar residues). Positions 283–315 (PNAAGFQSSPSSMPLLDRSPAHSPPRTPTPGAS) are disordered. One can recognise an LEM domain in the interval 355–399 (HLPVSTVSDLELLKGLRALGENPHPITPFTRQLYHQQLEEAQIAP). In terms of domain architecture, GIY-YIG spans 448-566 (KSSFTYLLLD…ALGIQTLTNQ (119 aa)). A Nuclear localization signal motif is present at residues 579 to 586 (PPARRRRL).

Interacts (via LEM domain) with BANF1; the interaction may favor BANF1 dimerization. As to expression, expression is predominant in adult bone marrow.

The protein localises to the cytoplasm. Its subcellular location is the nucleus. Functionally, endonuclease that probably plays a role in the DNA damage response and DNA repair. This Homo sapiens (Human) protein is Ankyrin repeat and LEM domain-containing protein 1 (ANKLE1).